The chain runs to 135 residues: Large ribosomal subunit protein uL16c (135 aa).

It belongs to the universal ribosomal protein uL16 family. In terms of assembly, part of the 50S ribosomal subunit.

It localises to the plastid. Its subcellular location is the chloroplast. The chain is Large ribosomal subunit protein uL16c from Cucumis sativus (Cucumber).